We begin with the raw amino-acid sequence, 115 residues long: NADH-ubiquinone oxidoreductase chain 3 (115 aa).

3 helical membrane passes run 3–23, 55–75, and 84–104; these read LMLT…IAFW, FFLV…LLPL, and LNTM…SLAY.

It belongs to the complex I subunit 3 family. As to quaternary structure, core subunit of respiratory chain NADH dehydrogenase (Complex I) which is composed of 45 different subunits. Interacts with TMEM186. Interacts with TMEM242.

It is found in the mitochondrion inner membrane. The enzyme catalyses a ubiquinone + NADH + 5 H(+)(in) = a ubiquinol + NAD(+) + 4 H(+)(out). Functionally, core subunit of the mitochondrial membrane respiratory chain NADH dehydrogenase (Complex I) which catalyzes electron transfer from NADH through the respiratory chain, using ubiquinone as an electron acceptor. Essential for the catalytic activity of complex I. This is NADH-ubiquinone oxidoreductase chain 3 from Equus asinus (Donkey).